The primary structure comprises 272 residues: Small ribosomal subunit protein mS23 (272 aa).

Positions 236–272 (AGATGGAKEESDPAILPELEVAESTSESAQPAEIRTG) are disordered.

It belongs to the mitochondrion-specific ribosomal protein mS23 family. Component of the mitochondrial small ribosomal subunit.

The protein localises to the mitochondrion. The sequence is that of Small ribosomal subunit protein mS23 (RSM25) from Coccidioides immitis (strain RS) (Valley fever fungus).